A 367-amino-acid polypeptide reads, in one-letter code: F-box protein At3g56470 (367 aa).

Basic residues predominate over residues 1–18; it reads MVTRRRSKKKKKTKRKKQ. The tract at residues 1–24 is disordered; sequence MVTRRRSKKKKKTKRKKQSSKEKE. The 56-residue stretch at 26–81 folds into the F-box domain; that stretch reads YQTFINLPCDLLQLVISRLPLKDNIRASAVCKTWHEACVSLRVIHTSPWLIYFSKT.

The protein is F-box protein At3g56470 of Arabidopsis thaliana (Mouse-ear cress).